The chain runs to 116 residues: Large ribosomal subunit protein uL18 (116 aa).

Belongs to the universal ribosomal protein uL18 family. As to quaternary structure, part of the 50S ribosomal subunit; part of the 5S rRNA/L5/L18/L25 subcomplex. Contacts the 5S and 23S rRNAs.

Functionally, this is one of the proteins that bind and probably mediate the attachment of the 5S RNA into the large ribosomal subunit, where it forms part of the central protuberance. This Pseudomonas syringae pv. tomato (strain ATCC BAA-871 / DC3000) protein is Large ribosomal subunit protein uL18.